A 528-amino-acid polypeptide reads, in one-letter code: MDSLADQIRRRRTFAIISHPDAGKTTLTEKLLLYGGAIRLAGAVKGRKAARAATSDWMEIEKQRGISVTTSVMQFEYGGCMVNILDTPGHQDFSEDTYRTLEAADSAVMLIDAAKGVEPQTIKLFQVCRMRGIPIFTFVNKLDREGKDPFALMQEIEDVLGMRTCPMNWPVGMGSTFKGVYDRQKGHVELFDNRDHGQTKARVETTGVDDPALSAVLGEDLHRRLVEEIELLDVAGDPWDFDRFRRGDLSPLFWGSALTNFGVQSFLEYFLKLAPAPAPRLAGDRLVDPEEPRFSAFVFKIQANMNPAHRDRIAFMRIVSGRFERGMDVQHVRLGKKVRLSQPQQFMAQDRQIVEEAYAGDIIGVFDPGIFRIGDTLCTGEPVAFEGIPSFSPEHFARVRFKDAMKSKHFRKGLEELTEEGAIQVFYATQPGHPDPILGAVGELQFEVFQHRMRHEYGVEVILDRLPYEVARWVEGEGYQPRRFWGTDHMAVTDRDGRNVLLFRNEWTMRYVVEQNPGLIFRATAQAR.

The tr-type G domain occupies 9 to 280 (RRRRTFAIIS…LKLAPAPAPR (272 aa)). GTP is bound by residues 18-25 (SHPDAGKT), 86-90 (DTPGH), and 140-143 (NKLD).

The protein belongs to the TRAFAC class translation factor GTPase superfamily. Classic translation factor GTPase family. PrfC subfamily.

Its subcellular location is the cytoplasm. Its function is as follows. Increases the formation of ribosomal termination complexes and stimulates activities of RF-1 and RF-2. It binds guanine nucleotides and has strong preference for UGA stop codons. It may interact directly with the ribosome. The stimulation of RF-1 and RF-2 is significantly reduced by GTP and GDP, but not by GMP. The protein is Peptide chain release factor 3 of Symbiobacterium thermophilum (strain DSM 24528 / JCM 14929 / IAM 14863 / T).